The following is a 202-amino-acid chain: Glycerol-3-phosphate acyltransferase (202 aa).

5 helical membrane-spanning segments follow: residues 11-31 (LLLF…GMVI), 60-80 (AAAA…VLLA), 88-108 (AAQL…WLGF), 117-137 (FLGL…LTWL), and 162-182 (LLLG…VILW).

It belongs to the PlsY family. As to quaternary structure, probably interacts with PlsX.

It localises to the cell inner membrane. The enzyme catalyses an acyl phosphate + sn-glycerol 3-phosphate = a 1-acyl-sn-glycero-3-phosphate + phosphate. It participates in lipid metabolism; phospholipid metabolism. Functionally, catalyzes the transfer of an acyl group from acyl-phosphate (acyl-PO(4)) to glycerol-3-phosphate (G3P) to form lysophosphatidic acid (LPA). This enzyme utilizes acyl-phosphate as fatty acyl donor, but not acyl-CoA or acyl-ACP. This is Glycerol-3-phosphate acyltransferase from Ruegeria sp. (strain TM1040) (Silicibacter sp.).